A 206-amino-acid polypeptide reads, in one-letter code: Anti-sigma-W factor RsiW (206 aa).

The Cytoplasmic portion of the chain corresponds to Met1–His87. Zn(2+)-binding residues include His30, Cys34, and Cys37. The helical transmembrane segment at Pro88 to Trp108 threads the bilayer. Residues Lys109–Glu206 are Extracellular-facing.

It belongs to the zinc-associated anti-sigma factor (ZAS) superfamily. Anti-sigma-W factor family. The cofactor is Zn(2+). Post-translationally, is processed by three successive proteolytic events. First, the extracellular region of RsiW is cleaved by PrsW (Site-1 cleavage) in response to cell envelope stresses. Next, it undergoes cleavage at an intramembrane site (Site-2 cleavage) mediated by RasP. This cleavage uncovers a cryptic proteolytic tag with conserved alanine residues in the transmembrane segment, that is recognized mainly by the ClpXP protease, which completely degrades the protein in the cytoplasm and leads to the induction of the sigma-W-controlled genes.

The protein resides in the membrane. Is the anti-sigma factor for SigW. The presence of RsiW leads to the inactivation of SigW, and its proteolytic destruction to sigma-W activation. This is Anti-sigma-W factor RsiW (rsiW) from Bacillus licheniformis (strain ATCC 14580 / DSM 13 / JCM 2505 / CCUG 7422 / NBRC 12200 / NCIMB 9375 / NCTC 10341 / NRRL NRS-1264 / Gibson 46).